A 473-amino-acid polypeptide reads, in one-letter code: Histone-lysine N-methyltransferase ATXR2 (473 aa).

The SET domain occupies 33–441 (KLITSRRCNG…KNEEVTISYI (409 aa)). An MYND-type; degenerate zinc finger spans residues 134 to 203 (EEQCGGSSSS…DWESSHSLLC (70 aa)). Residues Cys-176, Cys-180, His-199, and Cys-203 each coordinate Zn(2+). An S-adenosyl-L-methionine-binding site is contributed by Tyr-440.

This sequence belongs to the class V-like SAM-binding methyltransferase superfamily. Histone-lysine methyltransferase family. TRX/MLL subfamily. Interacts with JMJ30. Binds to ARF7 and ARF19 in the nucleus.

It is found in the nucleus. It carries out the reaction L-lysyl-[histone] + S-adenosyl-L-methionine = N(6)-methyl-L-lysyl-[histone] + S-adenosyl-L-homocysteine + H(+). In terms of biological role, histone methyltransferase that methylates 'Lys-36' (H3K36me) of histone H3 to produce H3K36me3. Promotes early stages of cellular dedifferentiation through H3K36me3-dependent, and to a lesser degree H3K4me3-dependent, activation of Lateral organ Boundaries-Domain (LBD) (e.g. LBD16 and LBD29) genes. Positive regulator of root organogenesis including lateral root formation as well as adventitious root formation from wounded leaf tissues. Recruited by JMJ30/ARF (e.g. ARF7 and ARF19) complexes to promote the deposition of H3K36me3 and, to a lower extent, H3K4me3 at LBD genes promoters, thus ensuring their stable activation during callus formation on callus-inducing medium (CIM). This is Histone-lysine N-methyltransferase ATXR2 from Arabidopsis thaliana (Mouse-ear cress).